Here is a 214-residue protein sequence, read N- to C-terminus: MRNQNQPVAIEGYPFIGLFAFITLVFALLGWSVCTLLFLGLTLFAAYFFRNPDRYSDAEDAAILAPADGKVVYVGPALEERYFKSEVTKISIFMSVFNVHVNRVPMAGKVVDMFYNKGQFLNAAMDKASLHNEQSGMLLEHTSGRRMLVVQIAGLIARRIVTYPVVGDILQRGARYGLIRFGSRVDIYLEDDVDIQVTVGERVCCGETVLGFLK.

Catalysis depends on serine 183, which acts as the Schiff-base intermediate with substrate; via pyruvic acid. Position 183 is a pyruvic acid (Ser); by autocatalysis (serine 183).

The protein belongs to the phosphatidylserine decarboxylase family. PSD-A subfamily. As to quaternary structure, heterodimer of a large membrane-associated beta subunit and a small pyruvoyl-containing alpha subunit. Pyruvate serves as cofactor. Is synthesized initially as an inactive proenzyme. Formation of the active enzyme involves a self-maturation process in which the active site pyruvoyl group is generated from an internal serine residue via an autocatalytic post-translational modification. Two non-identical subunits are generated from the proenzyme in this reaction, and the pyruvate is formed at the N-terminus of the alpha chain, which is derived from the carboxyl end of the proenzyme. The post-translation cleavage follows an unusual pathway, termed non-hydrolytic serinolysis, in which the side chain hydroxyl group of the serine supplies its oxygen atom to form the C-terminus of the beta chain, while the remainder of the serine residue undergoes an oxidative deamination to produce ammonia and the pyruvoyl prosthetic group on the alpha chain.

It localises to the cell membrane. It carries out the reaction a 1,2-diacyl-sn-glycero-3-phospho-L-serine + H(+) = a 1,2-diacyl-sn-glycero-3-phosphoethanolamine + CO2. The protein operates within phospholipid metabolism; phosphatidylethanolamine biosynthesis; phosphatidylethanolamine from CDP-diacylglycerol: step 2/2. Catalyzes the formation of phosphatidylethanolamine (PtdEtn) from phosphatidylserine (PtdSer). This Syntrophotalea carbinolica (strain DSM 2380 / NBRC 103641 / GraBd1) (Pelobacter carbinolicus) protein is Phosphatidylserine decarboxylase proenzyme.